The sequence spans 264 residues: GTP cyclohydrolase FolE2 (264 aa).

It belongs to the GTP cyclohydrolase IV family.

The enzyme catalyses GTP + H2O = 7,8-dihydroneopterin 3'-triphosphate + formate + H(+). The protein operates within cofactor biosynthesis; 7,8-dihydroneopterin triphosphate biosynthesis; 7,8-dihydroneopterin triphosphate from GTP: step 1/1. Its function is as follows. Converts GTP to 7,8-dihydroneopterin triphosphate. The sequence is that of GTP cyclohydrolase FolE2 from Vesicomyosocius okutanii subsp. Calyptogena okutanii (strain HA).